The following is an 808-amino-acid chain: METGTAPLVAPPRRHGAPAAPSPPPRGSRAGPVVVVAPGPPVTTATSAPVTLVAPGEARPAWVPGSAETSAPAPAPAPAPAPAVTGSTVVVLTLEASPEAPKPQLPSGPESPEPAAVAGVETSRALAAGADSPKTEEARPSPAPGPGTPTGTPTRTPSRTAPGALTAKPPLAPKPGTTVASGVTARSASGQVTGGHGAAAATSASAGQAPEDPSGPGTGPSGTCEAPVAVVTVTPAPEPAENSQDLGSTSSLGPGISGPRGQAPDTLSYLDSVSLMSGTLESLADDVSSMGSDSEINGLALRKTDKYGFLGGSQYSGSLESSIPVDVARQRELKWLDMFSNWDKWLSRRFQKVKLRCRKGIPSSLRAKAWQYLSNSKELLEQNPGKFEELERAPGDPKWLDVIEKDLHRQFPFHEMFAARGGHGQQDLYRILKAYTIYRPDEGYCQAQAPVAAVLLMHMPAEQAFWCLVQICDKYLPGYYSAGLEAIQLDGEIFFALLRRASPLAHRHLRRQRIDPVLYMTEWFMCIFARTLPWASVLRVWDMFFCEGVKIIFRVALVLLRHTLGSVEKLRSCQGMYETMEQLRNLPQQCMQEDFLVHEVTNLPVTEALIERENAAQLKKWRETRGELQYRPSRRLHGSRAIHEERRRQQPPLGPSSSLLSLPGLKSRGSRAAGGAPSPPPPVRRASAGPAPGPVVTAEGLHPSLPSPTGNSTPLGSSKETRKQEKERQKQEKERQKQEKEREKERQKQEKEREKQEKEREKQEKERQKQEKKAQGRKLSLRRKADGPPGPHDGGDRPSAEARQDAYF.

3 disordered regions span residues 1–38, 60–225, and 237–264; these read METG…VVAP, PAWV…GTCE, and PEPA…GQAP. Ser-22 carries the phosphoserine modification. A compositionally biased stretch (low complexity) spans 27–38; that stretch reads GSRAGPVVVVAP. The span at 100 to 112 shows a compositional bias: pro residues; the sequence is APKPQLPSGPESP. Residue Ser-141 is modified to Phosphoserine. Low complexity predominate over residues 149–178; it reads PTGTPTRTPSRTAPGALTAKPPLAPKPGTT. Thr-152 carries the post-translational modification Phosphothreonine. A compositionally biased stretch (polar residues) spans 179-189; sequence VASGVTARSAS. The residue at position 186 (Arg-186) is an Omega-N-methylarginine. Residues 198–209 show a composition bias toward low complexity; the sequence is AAAATSASAGQA. Over residues 242–252 the composition is skewed to polar residues; it reads NSQDLGSTSSL. The Rab-GAP TBC domain occupies 360-548; sequence GIPSSLRAKA…RVWDMFFCEG (189 aa). Positions 629-808 are disordered; it reads QYRPSRRLHG…SAEARQDAYF (180 aa). Residues 655–676 are compositionally biased toward low complexity; that stretch reads PSSSLLSLPGLKSRGSRAAGGA. Residues Ser-658, Ser-661, Ser-678, and Ser-687 each carry the phosphoserine modification. Residues 684–696 show a composition bias toward low complexity; the sequence is RRASAGPAPGPVV. The segment covering 707 to 718 has biased composition (polar residues); that stretch reads SPTGNSTPLGSS. Residues 716 to 782 adopt a coiled-coil conformation; that stretch reads GSSKETRKQE…KAQGRKLSLR (67 aa). Basic and acidic residues-rich tracts occupy residues 719–774 and 793–808; these read KETR…EKKA and DGGD…DAYF.

It localises to the cytoplasm. The protein resides in the cell membrane. Its function is as follows. Acts as a GTPase-activating protein for RAB3A, RAB22A, RAB27A, and RAB35. Does not act on RAB2A and RAB6A. This Homo sapiens (Human) protein is TBC1 domain family member 10B (TBC1D10B).